Consider the following 354-residue polypeptide: Guanine nucleotide-binding protein alpha-3 subunit (354 aa).

Gly-2 carries the N-myristoyl glycine lipid modification. The S-palmitoyl cysteine moiety is linked to residue Cys-4. Residues 33–354 (KECKILLLGS…TNALKDSGIL (322 aa)) enclose the G-alpha domain. The segment at 36-49 (KILLLGSGESGKST) is G1 motif. Residues 41-48 (GSGESGKS), 177-183 (LRARSKT), 202-206 (DVGGQ), 271-274 (NKID), and Ala-326 each bind GTP. Ser-48 and Thr-183 together coordinate Mg(2+). The interval 175-183 (DVLRARSKT) is G2 motif. The tract at residues 198 to 207 (IHLFDVGGQR) is G3 motif. The tract at residues 267 to 274 (ILFLNKID) is G4 motif. Positions 324-329 (TQATDT) are G5 motif.

Belongs to the G-alpha family. As to quaternary structure, g proteins are composed of 3 units; alpha, beta and gamma. The alpha chain contains the guanine nucleotide binding site.

Its function is as follows. Guanine nucleotide-binding proteins (G proteins) are involved as modulators or transducers in various transmembrane signaling systems. GPA3 plays an active role in transmission of the pheromone signal. The polypeptide is Guanine nucleotide-binding protein alpha-3 subunit (GPA3) (Mycosarcoma maydis (Corn smut fungus)).